The sequence spans 359 residues: Adenosine deaminase (359 aa).

Zn(2+) is bound by residues His15 and His17. Substrate contacts are provided by His17, Asp19, and Gly184. A Zn(2+)-binding site is contributed by His213. The active-site Proton donor is the Glu216. Residue Asp295 coordinates Zn(2+). Position 296 (Asp296) interacts with substrate.

It belongs to the metallo-dependent hydrolases superfamily. Adenosine and AMP deaminases family. Requires Zn(2+) as cofactor.

It is found in the cell membrane. Its subcellular location is the cell junction. The protein localises to the cytoplasmic vesicle lumen. It localises to the cytoplasm. The protein resides in the lysosome. It carries out the reaction adenosine + H2O + H(+) = inosine + NH4(+). It catalyses the reaction 2'-deoxyadenosine + H2O + H(+) = 2'-deoxyinosine + NH4(+). Functionally, catalyzes the hydrolytic deamination of adenosine and 2-deoxyadenosine. Plays an important role in purine metabolism and in adenosine homeostasis. Modulates signaling by extracellular adenosine, and so contributes indirectly to cellular signaling events. May act as a positive regulator of T-cell coactivation. This chain is Adenosine deaminase (ada), found in Danio rerio (Zebrafish).